The following is a 452-amino-acid chain: Bifunctional protein GlmU (452 aa).

The segment at 1–232 (MTARNSLTIV…EDEVRGINTK (232 aa)) is pyrophosphorylase. UDP-N-acetyl-alpha-D-glucosamine contacts are provided by residues 11-14 (LAAG), Lys25, Gln78, and 83-84 (GT). Residue Asp108 coordinates Mg(2+). UDP-N-acetyl-alpha-D-glucosamine is bound by residues Gly144, Glu158, Asn173, and Asn230. Asn230 serves as a coordination point for Mg(2+). The tract at residues 233-253 (AQLAEAETVMQTRLRLAAMAA) is linker. The segment at 254–452 (GVTLIAPETV…KSRHRKPKAH (199 aa)) is N-acetyltransferase. UDP-N-acetyl-alpha-D-glucosamine contacts are provided by Arg319 and Lys337. His349 acts as the Proton acceptor in catalysis. Tyr352 and Asn363 together coordinate UDP-N-acetyl-alpha-D-glucosamine. Acetyl-CoA contacts are provided by residues Ala366, 372-373 (NY), Ser391, Ser409, and Arg426.

In the N-terminal section; belongs to the N-acetylglucosamine-1-phosphate uridyltransferase family. This sequence in the C-terminal section; belongs to the transferase hexapeptide repeat family. Homotrimer. It depends on Mg(2+) as a cofactor.

Its subcellular location is the cytoplasm. The enzyme catalyses alpha-D-glucosamine 1-phosphate + acetyl-CoA = N-acetyl-alpha-D-glucosamine 1-phosphate + CoA + H(+). It carries out the reaction N-acetyl-alpha-D-glucosamine 1-phosphate + UTP + H(+) = UDP-N-acetyl-alpha-D-glucosamine + diphosphate. It functions in the pathway nucleotide-sugar biosynthesis; UDP-N-acetyl-alpha-D-glucosamine biosynthesis; N-acetyl-alpha-D-glucosamine 1-phosphate from alpha-D-glucosamine 6-phosphate (route II): step 2/2. The protein operates within nucleotide-sugar biosynthesis; UDP-N-acetyl-alpha-D-glucosamine biosynthesis; UDP-N-acetyl-alpha-D-glucosamine from N-acetyl-alpha-D-glucosamine 1-phosphate: step 1/1. It participates in bacterial outer membrane biogenesis; LPS lipid A biosynthesis. Functionally, catalyzes the last two sequential reactions in the de novo biosynthetic pathway for UDP-N-acetylglucosamine (UDP-GlcNAc). The C-terminal domain catalyzes the transfer of acetyl group from acetyl coenzyme A to glucosamine-1-phosphate (GlcN-1-P) to produce N-acetylglucosamine-1-phosphate (GlcNAc-1-P), which is converted into UDP-GlcNAc by the transfer of uridine 5-monophosphate (from uridine 5-triphosphate), a reaction catalyzed by the N-terminal domain. This Rhodopseudomonas palustris (strain ATCC BAA-98 / CGA009) protein is Bifunctional protein GlmU.